Reading from the N-terminus, the 126-residue chain is Small ribosomal subunit protein uS13 (126 aa).

Residues 92–126 (HRRGLPVRGQRTKTNARTRKGPKRTVAGKKKAGRK) are disordered.

The protein belongs to the universal ribosomal protein uS13 family. Part of the 30S ribosomal subunit. Forms a loose heterodimer with protein S19. Forms two bridges to the 50S subunit in the 70S ribosome.

In terms of biological role, located at the top of the head of the 30S subunit, it contacts several helices of the 16S rRNA. In the 70S ribosome it contacts the 23S rRNA (bridge B1a) and protein L5 of the 50S subunit (bridge B1b), connecting the 2 subunits; these bridges are implicated in subunit movement. Contacts the tRNAs in the A and P-sites. The chain is Small ribosomal subunit protein uS13 from Kineococcus radiotolerans (strain ATCC BAA-149 / DSM 14245 / SRS30216).